The following is a 68-amino-acid chain: Large ribosomal subunit protein uL30 (68 aa).

It belongs to the universal ribosomal protein uL30 family. In terms of assembly, part of the 50S ribosomal subunit.

This is Large ribosomal subunit protein uL30 from Kocuria rhizophila (strain ATCC 9341 / DSM 348 / NBRC 103217 / DC2201).